The primary structure comprises 1863 residues: Breast cancer type 1 susceptibility protein homolog (1863 aa).

M1 carries the N-acetylmethionine modification. An RING-type zinc finger spans residues C24–K65. Residue K109 forms a Glycyl lysine isopeptide (Lys-Gly) (interchain with G-Cter in SUMO2) linkage. S114 is subject to Phosphoserine. The segment at T231–S267 is disordered. Basic and acidic residues predominate over residues T248–K260. K301 is covalently cross-linked (Glycyl lysine isopeptide (Lys-Gly) (interchain with G-Cter in SUMO2)). The tract at residues N306–K338 is disordered. K339 participates in a covalent cross-link: Glycyl lysine isopeptide (Lys-Gly) (interchain with G-Cter in SUMO2). S395, S398, S423, and S434 each carry phosphoserine. Residues K443, K459, and K519 each participate in a glycyl lysine isopeptide (Lys-Gly) (interchain with G-Cter in SUMO2) cross-link. Residue S551 is modified to Phosphoserine. Glycyl lysine isopeptide (Lys-Gly) (interchain with G-Cter in SUMO2) cross-links involve residues K583 and K654. Residues I650–L735 form a disordered region. Phosphoserine occurs at positions 694, 708, and 725. Over residues A705–S716 the composition is skewed to polar residues. Glycyl lysine isopeptide (Lys-Gly) (interchain with G-Cter in SUMO2) cross-links involve residues K734 and K739. Residues S753 and S840 each carry the phosphoserine modification. Glycyl lysine isopeptide (Lys-Gly) (interchain with G-Cter in SUMO2) cross-links involve residues K918 and K987. S988 carries the post-translational modification Phosphoserine; by CHEK2. Residue S1009 is modified to Phosphoserine. The segment at N1045–E1066 is disordered. A Glycyl lysine isopeptide (Lys-Gly) (interchain with G-Cter in SUMO2) cross-link involves residue K1079. 11 positions are modified to phosphoserine: S1143, S1189, S1191, S1211, S1217, S1218, S1280, S1328, S1336, S1342, and S1387. Residues V1181–L1216 are disordered. The interval K1322–T1394 is disordered. Positions S1342 to G1360 are enriched in acidic residues. The span at E1373–T1394 shows a compositional bias: polar residues. A Phosphothreonine modification is found at T1394. Residues R1397–Q1424 are interaction with PALB2. 4 positions are modified to phosphoserine: S1423, S1457, S1524, and S1542. Residues E1440–L1504 are disordered. Positions P1445–E1470 are enriched in polar residues. Disordered regions lie at residues E1540–T1597 and S1610–S1642. Polar residues predominate over residues S1610 to G1624. BRCT domains are found at residues S1642–V1736 and Q1756–I1855.

In terms of assembly, heterodimer with BARD1. Part of the BRCA1-associated genome surveillance complex (BASC), which contains BRCA1, MSH2, MSH6, MLH1, ATM, BLM, PMS2 and the MRE11-RAD50-NBN protein (MRN) complex. This association could be a dynamic process changing throughout the cell cycle and within subnuclear domains. Component of the BRCA1-A complex, at least composed of BRCA1, BARD1, UIMC1/RAP80, ABRAXAS1, BRCC3/BRCC36, BABAM2 and BABAM1/NBA1. Interacts (via the BRCT domains) with ABRAXAS1 (phosphorylated form); this is important for recruitment to sites of DNA damage. Can form a heterotetramer with two molecules of ABRAXAS1 (phosphorylated form). Component of the BRCA1-RBBP8 complex. Interacts (via the BRCT domains) with RBBP8 ('Ser-327' phosphorylated form); the interaction ubiquitinates RBBP8, regulates CHEK1 activation, and involves RBBP8 in BRCA1-dependent G2/M checkpoint control on DNA damage. Associates with RNA polymerase II holoenzyme. Interacts with SMC1A, NELFB, DCLRE1C, CLSPN. CHEK1, CHEK2, BAP1, BRCC3, UBXN1 and PCLAF. Interacts (via BRCT domains) with BRIP1 (phosphorylated form). Interacts with FANCD2 (ubiquitinated form). Interacts with H2AX (phosphorylated on 'Ser-140'). Interacts (via the BRCT domains) with ACACA (phosphorylated form); the interaction prevents dephosphorylation of ACACA. Part of a BRCA complex containing BRCA1, BRCA2 and PALB2. Interacts directly with PALB2; the interaction is essential for its function in HRR. Interacts directly with BRCA2; the interaction occurs only in the presence of PALB2 which serves as the bridging protein. Interacts (via the BRCT domains) with LMO4; the interaction represses the transcriptional activity of BRCA1. Interacts (via the BRCT domains) with CCAR2 (via N-terminus); the interaction represses the transcriptional activator activity of BRCA1. Interacts with EXD2. Interacts (via C-terminus) with DHX9; this interaction is direct and links BRCA1 to the RNA polymerase II holoenzyme. Interacts with DNA helicase ZGRF1; the interaction is increased following DNA damage induction. Post-translationally, phosphorylated in response to IR, UV, and various stimuli that cause checkpoint activation, probably by ATM or ATR. Phosphorylation at Ser-988 by CHEK2 regulates mitotic spindle assembly. Phosphorylation by AURKA regulates centrosomal microtubule nucleation. In terms of processing, autoubiquitinated, undergoes 'Lys-6'-linked polyubiquitination. 'Lys-6'-linked polyubiquitination does not promote degradation.

Its subcellular location is the nucleus. The protein resides in the chromosome. The protein localises to the cytoplasm. The catalysed reaction is S-ubiquitinyl-[E2 ubiquitin-conjugating enzyme]-L-cysteine + [acceptor protein]-L-lysine = [E2 ubiquitin-conjugating enzyme]-L-cysteine + N(6)-ubiquitinyl-[acceptor protein]-L-lysine.. It functions in the pathway protein modification; protein ubiquitination. Functionally, E3 ubiquitin-protein ligase that specifically mediates the formation of 'Lys-6'-linked polyubiquitin chains and plays a central role in DNA repair by facilitating cellular responses to DNA damage. It is unclear whether it also mediates the formation of other types of polyubiquitin chains. The BRCA1-BARD1 heterodimer coordinates a diverse range of cellular pathways such as DNA damage repair, ubiquitination and transcriptional regulation to maintain genomic stability. Regulates centrosomal microtubule nucleation. Required for appropriate cell cycle arrests after ionizing irradiation in both the S-phase and the G2 phase of the cell cycle. Required for FANCD2 targeting to sites of DNA damage. Inhibits lipid synthesis by binding to inactive phosphorylated ACACA and preventing its dephosphorylation. Contributes to homologous recombination repair (HRR) via its direct interaction with PALB2, fine-tunes recombinational repair partly through its modulatory role in the PALB2-dependent loading of BRCA2-RAD51 repair machinery at DNA breaks. Component of the BRCA1-RBBP8 complex which regulates CHEK1 activation and controls cell cycle G2/M checkpoints on DNA damage via BRCA1-mediated ubiquitination of RBBP8. Acts as a transcriptional activator. This chain is Breast cancer type 1 susceptibility protein homolog (BRCA1), found in Pongo pygmaeus (Bornean orangutan).